We begin with the raw amino-acid sequence, 239 residues long: MWNQKHDLESAQTPLYPMMSESPELRWSFIRKVYSIISIQLLVTIAVAATVVKVHSISVFFTTTTAGFALYILLILTPLIVMCPLYYYHQKHPVNYLLLGIFTVALAFAVGLTCAFTSGKVILESVILTAVVVISLTLYTFWAAKRGHDFNFLGPFLFGAVIVLMVFSFIQILFPLGKISVMIYGCLASIIFCGYIVYDTDNLIKRHSYDEYIWAAVSLYLDVINLFLSLLTLLRAVDS.

7 helical membrane passes run 41–61 (LLVTIAVAATVVKVHSISVFF), 66–86 (AGFALYILLILTPLIVMCPLY), 96–116 (YLLLGIFTVALAFAVGLTCAF), 121–141 (VILESVILTAVVVISLTLYTF), 156–176 (FLFGAVIVLMVFSFIQILFPL), 179–199 (ISVMIYGCLASIIFCGYIVYD), and 213–233 (IWAAVSLYLDVINLFLSLLTL).

The protein belongs to the BI1 family. As to expression, expressed in seedlings, roots, leaves, inflorescences and flowers.

The protein resides in the membrane. Functionally, regulates the brassinosteroid (BR) signaling pathway that mediates cell elongation and organ morphogenesis. (Microbial infection) Facilitates the development of the powdery mildew fungus E.cruciferarum. In terms of biological role, (Microbial infection) May prevent cell death upon A.alternata f.sp. lycopersici (AAL) toxin treatment. In Arabidopsis thaliana (Mouse-ear cress), this protein is Protein LIFEGUARD 2.